The following is a 473-amino-acid chain: Photosystem II CP43 reaction center protein (473 aa).

Residues 1-14 constitute a propeptide that is removed on maturation; that stretch reads MKNLYSLRRFYHVE. N-acetylthreonine is present on Thr15. A Phosphothreonine modification is found at Thr15. Transmembrane regions (helical) follow at residues 69 to 93, 134 to 155, 178 to 200, 255 to 275, and 291 to 312; these read LFEVAHFVPEKPMYEQGLILLPHLA, LVGPETLEESFPFFGYVWKDKN, KAMYFGGIYDTWAPGGGDVRIIS, KPWAWARRAFVWSGEAYLSYS, and WFNTTAYPSEFYGPTGPEASQS. Glu367 is a [CaMn4O5] cluster binding site. A helical transmembrane segment spans residues 447 to 471; sequence RARAAAAGFEKGIDRDNEPVLSMRP.

The protein belongs to the PsbB/PsbC family. PsbC subfamily. In terms of assembly, PSII is composed of 1 copy each of membrane proteins PsbA, PsbB, PsbC, PsbD, PsbE, PsbF, PsbH, PsbI, PsbJ, PsbK, PsbL, PsbM, PsbT, PsbX, PsbY, PsbZ, Psb30/Ycf12, at least 3 peripheral proteins of the oxygen-evolving complex and a large number of cofactors. It forms dimeric complexes. Binds multiple chlorophylls and provides some of the ligands for the Ca-4Mn-5O cluster of the oxygen-evolving complex. It may also provide a ligand for a Cl- that is required for oxygen evolution. PSII binds additional chlorophylls, carotenoids and specific lipids. serves as cofactor.

The protein resides in the plastid. It localises to the chloroplast thylakoid membrane. Functionally, one of the components of the core complex of photosystem II (PSII). It binds chlorophyll and helps catalyze the primary light-induced photochemical processes of PSII. PSII is a light-driven water:plastoquinone oxidoreductase, using light energy to abstract electrons from H(2)O, generating O(2) and a proton gradient subsequently used for ATP formation. The protein is Photosystem II CP43 reaction center protein of Chlorella vulgaris (Green alga).